The primary structure comprises 126 residues: uncharacterized protein (126 aa).

The interval 1-27 is disordered; it reads MSKSKTPNFDDMEVLDDTNDEYDDSES. The span at 10-27 shows a compositional bias: acidic residues; that stretch reads DDMEVLDDTNDEYDDSES.

This is an uncharacterized protein from Halorubrum sp. PV6 (HRPV-1).